The primary structure comprises 214 residues: cAMP-activated global transcriptional regulator Vfr (214 aa).

3',5'-cyclic AMP contacts are provided by residues 59 to 60, 73 to 75, 87 to 88, 132 to 133, Arg179, and Arg185; these read RE, GEL, RS, and TT. The 73-residue stretch at 142–214 folds into the HTH crp-type domain; sequence LDVTGRVART…GKTMVVFGTR (73 aa). The H-T-H motif DNA-binding region spans 174–193; it reads RQEIGRIVGCSREMVGRVLK.

Homodimer.

In terms of biological role, global cAMP-dependent transcriptional regulator that controls virulence gene expression by distinct cAMP-dependent and -independent mechanisms, which allow to fine tune its virulence program in response to specific host cues or environments. Controls the expression of many regulatory targets including type II, type III and type IV secretion systems, flagellar-mediated motility, and quorum sensing systems. Transcriptional control is exerted by binding to a well-characterized consensus site (5'-ANWWTGNGAWNYAGWTCACAT) within target promoters. Directly binds to the toxA upstream region to regulate exotoxin A production, to the lasR gene promoter to activate the las quorum-sensing system or to the exsA promoter to regulate type III secretion system. Autoregulates as well its own expression. This is cAMP-activated global transcriptional regulator Vfr (vfr) from Pseudomonas aeruginosa (strain ATCC 15692 / DSM 22644 / CIP 104116 / JCM 14847 / LMG 12228 / 1C / PRS 101 / PAO1).